We begin with the raw amino-acid sequence, 243 residues long: NAD-dependent protein deacylase (243 aa).

The region spanning 1–234 is the Deacetylase sirtuin-type domain; that stretch reads MYQHIVVLTG…PKLVDTILAG (234 aa). 10–29 is an NAD(+) binding site; that stretch reads GAGISAESGLRTFRDQDGLW. Residues Y54 and R57 each contribute to the substrate site. Position 91–94 (91–94) interacts with NAD(+); it reads QNID. Catalysis depends on H109, which acts as the Proton acceptor. Zn(2+) is bound by residues C117 and C136. Residues 176–178, 202–204, and A220 each bind NAD(+); these read GTS and NLQ.

It belongs to the sirtuin family. Class III subfamily. Zn(2+) serves as cofactor.

The protein resides in the cytoplasm. The catalysed reaction is N(6)-acetyl-L-lysyl-[protein] + NAD(+) + H2O = 2''-O-acetyl-ADP-D-ribose + nicotinamide + L-lysyl-[protein]. It catalyses the reaction N(6)-succinyl-L-lysyl-[protein] + NAD(+) + H2O = 2''-O-succinyl-ADP-D-ribose + nicotinamide + L-lysyl-[protein]. In terms of biological role, NAD-dependent lysine deacetylase and desuccinylase that specifically removes acetyl and succinyl groups on target proteins. Modulates the activities of several proteins which are inactive in their acylated form. The chain is NAD-dependent protein deacylase from Shewanella oneidensis (strain ATCC 700550 / JCM 31522 / CIP 106686 / LMG 19005 / NCIMB 14063 / MR-1).